The primary structure comprises 325 residues: Lipoyl synthase (325 aa).

The interval 1–24 is disordered; the sequence is MPIAPDRVRHPEKANRPDNPIQRK. [4Fe-4S] cluster-binding residues include C54, C59, C65, C80, C84, C87, and S293. The 217-residue stretch at 66-282 folds into the Radical SAM core domain; sequence WKKKHATFMI…VTVGRGKGFL (217 aa).

Belongs to the radical SAM superfamily. Lipoyl synthase family. Requires [4Fe-4S] cluster as cofactor.

Its subcellular location is the cytoplasm. The enzyme catalyses [[Fe-S] cluster scaffold protein carrying a second [4Fe-4S](2+) cluster] + N(6)-octanoyl-L-lysyl-[protein] + 2 oxidized [2Fe-2S]-[ferredoxin] + 2 S-adenosyl-L-methionine + 4 H(+) = [[Fe-S] cluster scaffold protein] + N(6)-[(R)-dihydrolipoyl]-L-lysyl-[protein] + 4 Fe(3+) + 2 hydrogen sulfide + 2 5'-deoxyadenosine + 2 L-methionine + 2 reduced [2Fe-2S]-[ferredoxin]. The protein operates within protein modification; protein lipoylation via endogenous pathway; protein N(6)-(lipoyl)lysine from octanoyl-[acyl-carrier-protein]: step 2/2. In terms of biological role, catalyzes the radical-mediated insertion of two sulfur atoms into the C-6 and C-8 positions of the octanoyl moiety bound to the lipoyl domains of lipoate-dependent enzymes, thereby converting the octanoylated domains into lipoylated derivatives. The sequence is that of Lipoyl synthase from Rhodospirillum centenum (strain ATCC 51521 / SW).